The following is a 449-amino-acid chain: MLNYTGLENKNVLVVGLAKSGYEAAKLLSKLGANVTVNDGKDLSQDAHAKDLESMGISVVSGSHPLTLLDNNPIIVKNPGIPYTVSIIDEAVKRGLKILTEVELSYLISEAPIIAVTGTNGKTTVTSLIGDMFKKSRLTGRLSGNIGYVASKVAQEVKPTDYLVTELSSFQLLGIEKYKPHIAIITNIYSAHLDYHENLENYQNAKKQIYKNQTEEDYLICNYHQRQVIESEELKAKTLYFSTQQEVDGIYIKDGFIVYKGVRIINTEDLVLPGEHNLENILAAVLACILAGVPIKAIIDSLTTFSGIEHRLQYVGTNRTNKYYNDSKATNTLATQFALNSFNQPIIWLCGGLDRGNEFDELIPYMENVRAMVVFGQTKAKFAKLGNSQGKSVIEANNVEDAVDKVQDIIEPNDVVLLSPACASWDQYSTFEERGEKFIERFRAHLPSY.

118–124 (GTNGKTT) is an ATP binding site.

This sequence belongs to the MurCDEF family.

The protein resides in the cytoplasm. The enzyme catalyses UDP-N-acetyl-alpha-D-muramoyl-L-alanine + D-glutamate + ATP = UDP-N-acetyl-alpha-D-muramoyl-L-alanyl-D-glutamate + ADP + phosphate + H(+). It participates in cell wall biogenesis; peptidoglycan biosynthesis. Cell wall formation. Catalyzes the addition of glutamate to the nucleotide precursor UDP-N-acetylmuramoyl-L-alanine (UMA). This is UDP-N-acetylmuramoylalanine--D-glutamate ligase from Staphylococcus aureus (strain Mu3 / ATCC 700698).